A 242-amino-acid polypeptide reads, in one-letter code: Uridylate kinase (242 aa).

16 to 19 (KVSG) lines the ATP pocket. Gly-58 is a binding site for UMP. Positions 59 and 63 each coordinate ATP. Residues Asp-78 and 139-146 (TGNPFCTT) each bind UMP. ATP is bound by residues Thr-166, Gln-167, Tyr-172, and Asp-175.

Belongs to the UMP kinase family. In terms of assembly, homohexamer.

The protein localises to the cytoplasm. It carries out the reaction UMP + ATP = UDP + ADP. Its pathway is pyrimidine metabolism; CTP biosynthesis via de novo pathway; UDP from UMP (UMPK route): step 1/1. Inhibited by UTP. Functionally, catalyzes the reversible phosphorylation of UMP to UDP. This chain is Uridylate kinase, found in Rickettsia prowazekii (strain Madrid E).